Reading from the N-terminus, the 175-residue chain is Anterior gradient protein 2 homolog (175 aa).

Residues 1–20 (MEKIPVSAFLLLVALSYTLA) form the signal peptide. Residues 21–40 (RDTTVKPGAKKDTKDSRPKL) form a required to promote cell adhesion region. Short sequence motifs (homodimer stabilization; interchain) lie at residues 45 to 54 (SRGWGDQLIW) and 60 to 67 (EALYKSKT).

The protein belongs to the AGR family. Monomer and homodimer. Interacts with LYPD3 and DAG1 (alphaDAG1). Interacts with MUC2; disulfide-linked. Expressed strongly in trachea, lung, stomach, colon, prostate and small intestine. Expressed weakly in pituitary gland, salivary gland, mammary gland, bladder, appendix, ovary, fetal lung, uterus, pancreas, kidney, fetal kidney, testis, placenta, thyroid gland and in estrogen receptor (ER)-positive breast cancer cell lines.

It localises to the secreted. The protein localises to the endoplasmic reticulum. Functionally, required for MUC2 post-transcriptional synthesis and secretion. May play a role in the production of mucus by intestinal cells. Proto-oncogene that may play a role in cell migration, cell differentiation and cell growth. Promotes cell adhesion. This Homo sapiens (Human) protein is Anterior gradient protein 2 homolog (AGR2).